The chain runs to 203 residues: Ras-like protein family member 10A (203 aa).

Residues 1-203 (MGGSLRVAVL…ALHPARCSLM (203 aa)) are small GTPase-like. Residue 11-18 (GAPGVGKT) coordinates GTP. The Effector region motif lies at 33–42 (HRPTDGPRLY). GTP contacts are provided by residues 59–62 (DGDV) and 129–132 (NKRD). Position 200 is a cysteine methyl ester (cysteine 200). The S-farnesyl cysteine moiety is linked to residue cysteine 200. Residues 201–203 (SLM) constitute a propeptide, removed in mature form.

This sequence belongs to the small GTPase superfamily. Ras family. In terms of processing, isoprenylation is essential for nucleolar localization, and the proliferation-inhibiting activity of RASL10A. As to expression, expression appears to be strictly limited to the central nervous system.

The protein resides in the cell membrane. The protein localises to the nucleus. Its subcellular location is the nucleolus. The catalysed reaction is GTP + H2O = GDP + phosphate + H(+). Potent inhibitor of cellular proliferation. This is Ras-like protein family member 10A (RASL10A) from Homo sapiens (Human).